A 448-amino-acid polypeptide reads, in one-letter code: MILGTPKADWLAEFPRLADLIALRPSEWFNPAIAPSAEALADVGLGAADVADASARLQRFAPLIARLFPETAGSGGIIESDLVEVADFHDALRQHYAAELPGRLWLKRDSHLPISGSIKARGGIYEVLAHAERLALENGLVGLDDDYSRLAEPDCRAFFAGHRIAVGSTGNLGLSIGIIGAALGFQASVHMSADARQWKKDKLRAHGVTVVEYASDYSVAVEQGRREAAGDPYTHFVDDENSRDLFLGYAVAAERLRGQLDAAGIRVDSEHPLFVHLPCGVGGGPGGVAFGLKLAFGDAVHCLFAEPTHSPCMFLGVYTGRHEQVSVQDFGIDNRTAADGLAVGRPSGFVGRAMQRLLDGYYTVDDDELFRLLALLERSQGIRLEPSALAGAPGIARVTREPQGYRERMGLTSARLANATHLVWATGGGMVPEAEMHAYLERGRALLD.

Lysine 119 bears the N6-(pyridoxal phosphate)lysine mark.

This sequence belongs to the serine/threonine dehydratase family. DsdA subfamily. Requires pyridoxal 5'-phosphate as cofactor.

The enzyme catalyses D-serine = pyruvate + NH4(+). The polypeptide is Probable D-serine dehydratase (Pseudomonas paraeruginosa (strain DSM 24068 / PA7) (Pseudomonas aeruginosa (strain PA7))).